The chain runs to 321 residues: Lipoyl synthase (321 aa).

[4Fe-4S] cluster contacts are provided by Cys-68, Cys-73, Cys-79, Cys-94, Cys-98, Cys-101, and Ser-308. In terms of domain architecture, Radical SAM core spans 80-297; it reads FNHGTATFMI…KEIALELGFT (218 aa).

It belongs to the radical SAM superfamily. Lipoyl synthase family. [4Fe-4S] cluster is required as a cofactor.

It localises to the cytoplasm. The enzyme catalyses [[Fe-S] cluster scaffold protein carrying a second [4Fe-4S](2+) cluster] + N(6)-octanoyl-L-lysyl-[protein] + 2 oxidized [2Fe-2S]-[ferredoxin] + 2 S-adenosyl-L-methionine + 4 H(+) = [[Fe-S] cluster scaffold protein] + N(6)-[(R)-dihydrolipoyl]-L-lysyl-[protein] + 4 Fe(3+) + 2 hydrogen sulfide + 2 5'-deoxyadenosine + 2 L-methionine + 2 reduced [2Fe-2S]-[ferredoxin]. Its pathway is protein modification; protein lipoylation via endogenous pathway; protein N(6)-(lipoyl)lysine from octanoyl-[acyl-carrier-protein]: step 2/2. In terms of biological role, catalyzes the radical-mediated insertion of two sulfur atoms into the C-6 and C-8 positions of the octanoyl moiety bound to the lipoyl domains of lipoate-dependent enzymes, thereby converting the octanoylated domains into lipoylated derivatives. This chain is Lipoyl synthase, found in Aliivibrio fischeri (strain MJ11) (Vibrio fischeri).